The following is a 520-amino-acid chain: Cytochrome P450 84A1 (520 aa).

Methionine 1 is modified (N-acetylmethionine). A helical transmembrane segment spans residues 12–32; it reads LSDPTTSLVIVVSLFIFISFI. Cysteine 458 provides a ligand contact to heme.

It belongs to the cytochrome P450 family. Heme serves as cofactor.

Its subcellular location is the membrane. Its pathway is aromatic compound metabolism; phenylpropanoid biosynthesis. In Arabidopsis thaliana (Mouse-ear cress), this protein is Cytochrome P450 84A1 (CYP84A1).